The chain runs to 338 residues: Isopenicillin N synthase (338 aa).

Residues Arg-89, Tyr-93, Ser-185, and Tyr-191 each contribute to the isopenicillin N site. Residues Arg-89, Tyr-93, Ser-185, Tyr-191, His-216, and Asp-218 each coordinate N-[(5S)-5-amino-5-carboxypentanoyl]-L-cysteinyl-D-valine. The 109-residue stretch at 182–290 folds into the Fe2OG dioxygenase domain; the sequence is TLSSVVLIRY…RQSLPFFVNL (109 aa). Residues His-216, Asp-218, and His-272 each contribute to the Fe(2+) site. Arg-281 serves as a coordination point for 2-oxoglutarate. Ser-283 contributes to the isopenicillin N binding site. An N-[(5S)-5-amino-5-carboxypentanoyl]-L-cysteinyl-D-valine-binding site is contributed by Ser-283.

Belongs to the iron/ascorbate-dependent oxidoreductase family. As to quaternary structure, monomer. The cofactor is Fe(2+).

The protein localises to the cytoplasm. It is found in the cytosol. It carries out the reaction N-[(5S)-5-amino-5-carboxypentanoyl]-L-cysteinyl-D-valine + O2 = isopenicillin N + 2 H2O. Its pathway is antibiotic biosynthesis; penicillin G biosynthesis; penicillin G from L-alpha-aminoadipate and L-cysteine and L-valine: step 2/3. Its function is as follows. Isopenicillin N synthase; part of the gene cluster that mediates the biosynthesis of penicillin, the world's most important antibiotic. IpnA catalyzes the cyclization of the tripeptide N-[(5S)-5-amino-5-carboxypentanoyl]-L-cysteinyl-D-valine (LLD-ACV or ACV) to form isopenicillin N (IPN) that contains the beta-lactam nucleus. The penicillin biosynthesis occurs via 3 enzymatic steps, the first corresponding to the production of the tripeptide N-[(5S)-5-amino-5-carboxypentanoyl]-L-cysteinyl-D-valine (LLD-ACV or ACV) by the NRPS pcbAB. The tripeptide ACV is then cyclized to isopenicillin N (IPN) by the isopenicillin N synthase pcbC that forms the beta-lactam nucleus. Finally, the alpha-aminoadipyl side chain is exchanged for phenylacetic acid by the isopenicillin N acyltransferase penDE to yield penicillin in the peroxisomal matrix. The sequence is that of Isopenicillin N synthase (PCBC) from Hapsidospora chrysogena (Acremonium chrysogenum).